A 562-amino-acid chain; its full sequence is Bacillolysin (562 aa).

Residues 1-24 (MKKKKQALKVLLSVGILSSSFAFA) form the signal peptide. The propeptide at 25–245 (HTSSAAPNNV…KQAAKPAAKP (221 aa)) is activation peptide. Ca(2+)-binding residues include Asp-303, Asp-305, and Asp-384. His-388 serves as a coordination point for Zn(2+). Residue Glu-389 is part of the active site. Zn(2+)-binding residues include His-392 and Glu-412. The Ca(2+) site is built by Glu-423, Asn-429, Asp-431, Glu-433, Glu-436, Tyr-439, Thr-440, and Asp-446. His-477 serves as the catalytic Proton donor.

This sequence belongs to the peptidase M4 family. Ca(2+) serves as cofactor. The cofactor is Zn(2+).

It localises to the secreted. The catalysed reaction is Similar, but not identical, to that of thermolysin.. Functionally, extracellular zinc metalloprotease. This is Bacillolysin (nprM) from Priestia megaterium (strain DSM 319 / IMG 1521) (Bacillus megaterium).